A 485-amino-acid polypeptide reads, in one-letter code: Adenosylhomocysteinase 1 (485 aa).

Substrate contacts are provided by Thr64, Asp139, and Glu205. 206–208 (TTT) is an NAD(+) binding site. 2 residues coordinate substrate: Lys235 and Asp239. NAD(+) is bound by residues 271 to 276 (GDVGKG), Glu292, 348 to 350 (IGH), Asn397, His404, Lys479, 479 to 483 (KPPHY), and Tyr483.

It belongs to the adenosylhomocysteinase family. In terms of assembly, homotetramer. NAD(+) serves as cofactor.

It carries out the reaction S-adenosyl-L-homocysteine + H2O = L-homocysteine + adenosine. It participates in amino-acid biosynthesis; L-homocysteine biosynthesis; L-homocysteine from S-adenosyl-L-homocysteine: step 1/1. In terms of biological role, essential protein during embryogenesis. Adenosylhomocysteine is a competitive inhibitor of S-adenosyl-L-methionine-dependent methyl transferase reactions; therefore adenosylhomocysteinase may play a key role in the control of methylations via regulation of the intracellular concentration of adenosylhomocysteine. Required for DNA methylation-dependent gene silencing. This Arabidopsis thaliana (Mouse-ear cress) protein is Adenosylhomocysteinase 1.